Reading from the N-terminus, the 108-residue chain is Inner membrane protein H108R (108 aa).

A helical transmembrane segment spans residues 10–32 (LIVIITILITTRELSTTMLIVSL). Residues 49 to 64 (ENNTFSMPQKNSFSES) are compositionally biased toward polar residues. A disordered region spans residues 49 to 69 (ENNTFSMPQKNSFSESYNKDK). N-linked (GlcNAc...) asparagine; by host glycosylation occurs at Asn50.

It belongs to the asfivirus H108R family.

The protein localises to the virion membrane. The protein is Inner membrane protein H108R of Ornithodoros (relapsing fever ticks).